We begin with the raw amino-acid sequence, 393 residues long: Translation initiation factor eIF2B subunit beta (393 aa).

Residues valine 105–leucine 125 form a disordered region. Serine 106, serine 108, and serine 112 each carry phosphoserine.

Belongs to the eIF-2B alpha/beta/delta subunits family. As to quaternary structure, component of the translation initiation factor 2B (eIF2B) complex which is a heterodecamer of two sets of five different subunits: alpha, beta, gamma, delta and epsilon. Subunits alpha, beta and delta comprise a regulatory subcomplex and subunits epsilon and gamma comprise a catalytic subcomplex. Within the complex, the hexameric regulatory complex resides at the center, with the two heterodimeric catalytic subcomplexes bound on opposite sides.

The protein localises to the cytoplasm. It is found in the cytosol. In terms of biological role, acts as a component of the translation initiation factor 2B (eIF2B) complex, which catalyzes the exchange of GDP for GTP on the eukaryotic initiation factor 2 (eIF2) complex gamma subunit. Its guanine nucleotide exchange factor activity is repressed when bound to eIF2 complex phosphorylated on the alpha subunit, thereby limiting the amount of methionyl-initiator methionine tRNA available to the ribosome and consequently global translation is repressed. This Schizosaccharomyces pombe (strain 972 / ATCC 24843) (Fission yeast) protein is Translation initiation factor eIF2B subunit beta (tif222).